Reading from the N-terminus, the 231-residue chain is dTTP/UTP pyrophosphatase (231 aa).

Catalysis depends on aspartate 85, which acts as the Proton acceptor.

The protein belongs to the Maf family. YhdE subfamily. The cofactor is a divalent metal cation.

Its subcellular location is the cytoplasm. The catalysed reaction is dTTP + H2O = dTMP + diphosphate + H(+). It catalyses the reaction UTP + H2O = UMP + diphosphate + H(+). Functionally, nucleoside triphosphate pyrophosphatase that hydrolyzes dTTP and UTP. May have a dual role in cell division arrest and in preventing the incorporation of modified nucleotides into cellular nucleic acids. The chain is dTTP/UTP pyrophosphatase from Psychrobacter arcticus (strain DSM 17307 / VKM B-2377 / 273-4).